The chain runs to 653 residues: tRNA 5-methylaminomethyl-2-thiouridine biosynthesis bifunctional protein MnmC (653 aa).

The segment at 1-233 is tRNA (mnm(5)s(2)U34)-methyltransferase; the sequence is MKTAPITPGR…KRDITVARFT (233 aa). Residues 258–653 form an FAD-dependent cmnm(5)s(2)U34 oxidoreductase region; it reads IGAGLAGCAA…YALPRWRSDS (396 aa).

It in the N-terminal section; belongs to the methyltransferase superfamily. tRNA (mnm(5)s(2)U34)-methyltransferase family. This sequence in the C-terminal section; belongs to the DAO family. The cofactor is FAD.

It localises to the cytoplasm. The enzyme catalyses 5-aminomethyl-2-thiouridine(34) in tRNA + S-adenosyl-L-methionine = 5-methylaminomethyl-2-thiouridine(34) in tRNA + S-adenosyl-L-homocysteine + H(+). Its function is as follows. Catalyzes the last two steps in the biosynthesis of 5-methylaminomethyl-2-thiouridine (mnm(5)s(2)U) at the wobble position (U34) in tRNA. Catalyzes the FAD-dependent demodification of cmnm(5)s(2)U34 to nm(5)s(2)U34, followed by the transfer of a methyl group from S-adenosyl-L-methionine to nm(5)s(2)U34, to form mnm(5)s(2)U34. The chain is tRNA 5-methylaminomethyl-2-thiouridine biosynthesis bifunctional protein MnmC from Methylibium petroleiphilum (strain ATCC BAA-1232 / LMG 22953 / PM1).